A 390-amino-acid chain; its full sequence is Tryptophan synthase beta chain 2 (390 aa).

Lys-83 carries the post-translational modification N6-(pyridoxal phosphate)lysine.

The protein belongs to the TrpB family. Tetramer of two alpha and two beta chains. Pyridoxal 5'-phosphate serves as cofactor.

It carries out the reaction (1S,2R)-1-C-(indol-3-yl)glycerol 3-phosphate + L-serine = D-glyceraldehyde 3-phosphate + L-tryptophan + H2O. Its pathway is amino-acid biosynthesis; L-tryptophan biosynthesis; L-tryptophan from chorismate: step 5/5. Functionally, the beta subunit is responsible for the synthesis of L-tryptophan from indole and L-serine. The polypeptide is Tryptophan synthase beta chain 2 (trpB2) (Methanothermobacter marburgensis (strain ATCC BAA-927 / DSM 2133 / JCM 14651 / NBRC 100331 / OCM 82 / Marburg) (Methanobacterium thermoautotrophicum)).